The sequence spans 359 residues: Peptide chain release factor 1 (359 aa).

N5-methylglutamine is present on Gln235. Positions 283-305 are disordered; the sequence is QKAESERSASRKTQVGSGDRSER.

It belongs to the prokaryotic/mitochondrial release factor family. Methylated by PrmC. Methylation increases the termination efficiency of RF1.

The protein resides in the cytoplasm. In terms of biological role, peptide chain release factor 1 directs the termination of translation in response to the peptide chain termination codons UAG and UAA. The protein is Peptide chain release factor 1 of Bartonella bacilliformis (strain ATCC 35685 / KC583 / Herrer 020/F12,63).